Consider the following 274-residue polypeptide: Putative deoxyribonuclease TATDN1 homolog (274 aa).

Residues E105, H139, H162, and D208 each contribute to the a divalent metal cation site.

The protein belongs to the metallo-dependent hydrolases superfamily. TatD-type hydrolase family. Requires a divalent metal cation as cofactor.

Its subcellular location is the nucleus. Functionally, putative deoxyribonuclease. The chain is Putative deoxyribonuclease TATDN1 homolog from Enterocytozoon bieneusi (strain H348) (Microsporidian parasite).